The sequence spans 85 residues: Large ribosomal subunit protein bL27 (85 aa).

A disordered region spans residues 1 to 21 (MAHKKGVGSTRNGRDSDGQRL).

Belongs to the bacterial ribosomal protein bL27 family.

This Geotalea uraniireducens (strain Rf4) (Geobacter uraniireducens) protein is Large ribosomal subunit protein bL27.